The following is a 394-amino-acid chain: tRNA-specific 2-thiouridylase MnmA (394 aa).

ATP contacts are provided by residues 30–37 and Leu-56; that span reads AMSGGVDS. Cys-124 (nucleophile) is an active-site residue. Residues Cys-124 and Cys-220 are joined by a disulfide bond. Gly-148 serves as a coordination point for ATP. The interval 170 to 172 is interaction with tRNA; sequence RDQ. The active-site Cysteine persulfide intermediate is the Cys-220.

It belongs to the MnmA/TRMU family.

The protein resides in the cytoplasm. It carries out the reaction S-sulfanyl-L-cysteinyl-[protein] + uridine(34) in tRNA + AH2 + ATP = 2-thiouridine(34) in tRNA + L-cysteinyl-[protein] + A + AMP + diphosphate + H(+). Its function is as follows. Catalyzes the 2-thiolation of uridine at the wobble position (U34) of tRNA, leading to the formation of s(2)U34. The chain is tRNA-specific 2-thiouridylase MnmA from Hyphomonas neptunium (strain ATCC 15444).